The primary structure comprises 221 residues: ATP-dependent dethiobiotin synthetase BioD (221 aa).

ATP is bound at residue 11–16; that stretch reads DIGKTL. Threonine 15 contacts Mg(2+). The active site involves lysine 35. A substrate-binding site is contributed by threonine 39. ATP is bound by residues aspartate 44 and 103 to 106; that span reads EGAG. The Mg(2+) site is built by aspartate 44 and glutamate 103.

The protein belongs to the dethiobiotin synthetase family. As to quaternary structure, homodimer. Requires Mg(2+) as cofactor.

The protein resides in the cytoplasm. The enzyme catalyses (7R,8S)-7,8-diammoniononanoate + CO2 + ATP = (4R,5S)-dethiobiotin + ADP + phosphate + 3 H(+). It participates in cofactor biosynthesis; biotin biosynthesis; biotin from 7,8-diaminononanoate: step 1/2. Functionally, catalyzes a mechanistically unusual reaction, the ATP-dependent insertion of CO2 between the N7 and N8 nitrogen atoms of 7,8-diaminopelargonic acid (DAPA, also called 7,8-diammoniononanoate) to form a ureido ring. The chain is ATP-dependent dethiobiotin synthetase BioD from Leptospira borgpetersenii serovar Hardjo-bovis (strain L550).